Consider the following 394-residue polypeptide: 1-deoxy-D-xylulose 5-phosphate reductoisomerase (394 aa).

Residues Thr12, Gly13, Ser14, Ile15, Gly38, Asn41, and Asn132 each coordinate NADPH. Residue Lys133 participates in 1-deoxy-D-xylulose 5-phosphate binding. Residue Glu134 participates in NADPH binding. Asp156 contributes to the Mn(2+) binding site. The 1-deoxy-D-xylulose 5-phosphate site is built by Ser157, Glu158, Ser182, and His205. Residue Glu158 participates in Mn(2+) binding. Gly211 serves as a coordination point for NADPH. 1-deoxy-D-xylulose 5-phosphate contacts are provided by Ser218, Asn223, Lys224, and Glu227. Mn(2+) is bound at residue Glu227.

This sequence belongs to the DXR family. Mg(2+) is required as a cofactor. Requires Mn(2+) as cofactor.

It catalyses the reaction 2-C-methyl-D-erythritol 4-phosphate + NADP(+) = 1-deoxy-D-xylulose 5-phosphate + NADPH + H(+). It functions in the pathway isoprenoid biosynthesis; isopentenyl diphosphate biosynthesis via DXP pathway; isopentenyl diphosphate from 1-deoxy-D-xylulose 5-phosphate: step 1/6. Catalyzes the NADPH-dependent rearrangement and reduction of 1-deoxy-D-xylulose-5-phosphate (DXP) to 2-C-methyl-D-erythritol 4-phosphate (MEP). The sequence is that of 1-deoxy-D-xylulose 5-phosphate reductoisomerase from Arthrobacter sp. (strain FB24).